The following is a 24-amino-acid chain: Acetylcholine receptor subunit alpha (24 aa).

It belongs to the ligand-gated ion channel (TC 1.A.9) family. Acetylcholine receptor (TC 1.A.9.1) subfamily. Alpha-1/CHRNA1 sub-subfamily. As to quaternary structure, one of the alpha chains that assemble within the acetylcholine receptor, a pentamer of two alpha chains, a beta, a delta, and a gamma or epsilon chains.

The protein localises to the postsynaptic cell membrane. It is found in the cell membrane. It carries out the reaction K(+)(in) = K(+)(out). It catalyses the reaction Na(+)(in) = Na(+)(out). In terms of biological role, upon acetylcholine binding, the AChR responds by an extensive change in conformation that affects all subunits and leads to opening of an ion-conducting channel across the plasma membrane. This is Acetylcholine receptor subunit alpha (chrna1) from Electrophorus electricus (Electric eel).